The primary structure comprises 527 residues: Bifunctional purine biosynthesis protein PurH (527 aa).

Positions 8–156 constitute an MGS-like domain; sequence AGAKRPIRRA…KNHPSVAVVV (149 aa).

Belongs to the PurH family.

The enzyme catalyses (6R)-10-formyltetrahydrofolate + 5-amino-1-(5-phospho-beta-D-ribosyl)imidazole-4-carboxamide = 5-formamido-1-(5-phospho-D-ribosyl)imidazole-4-carboxamide + (6S)-5,6,7,8-tetrahydrofolate. It carries out the reaction IMP + H2O = 5-formamido-1-(5-phospho-D-ribosyl)imidazole-4-carboxamide. The protein operates within purine metabolism; IMP biosynthesis via de novo pathway; 5-formamido-1-(5-phospho-D-ribosyl)imidazole-4-carboxamide from 5-amino-1-(5-phospho-D-ribosyl)imidazole-4-carboxamide (10-formyl THF route): step 1/1. It functions in the pathway purine metabolism; IMP biosynthesis via de novo pathway; IMP from 5-formamido-1-(5-phospho-D-ribosyl)imidazole-4-carboxamide: step 1/1. The polypeptide is Bifunctional purine biosynthesis protein PurH (Mycobacterium sp. (strain JLS)).